The chain runs to 139 residues: Prefoldin subunit alpha (139 aa).

Belongs to the prefoldin subunit alpha family. Heterohexamer of two alpha and four beta subunits.

The protein localises to the cytoplasm. Molecular chaperone capable of stabilizing a range of proteins. Seems to fulfill an ATP-independent, HSP70-like function in archaeal de novo protein folding. This chain is Prefoldin subunit alpha, found in Picrophilus torridus (strain ATCC 700027 / DSM 9790 / JCM 10055 / NBRC 100828 / KAW 2/3).